A 144-amino-acid polypeptide reads, in one-letter code: Large ribosomal subunit protein uL11 (144 aa).

Belongs to the universal ribosomal protein uL11 family. Part of the ribosomal stalk of the 50S ribosomal subunit. Interacts with L10 and the large rRNA to form the base of the stalk. L10 forms an elongated spine to which L12 dimers bind in a sequential fashion forming a multimeric L10(L12)X complex. One or more lysine residues are methylated.

Functionally, forms part of the ribosomal stalk which helps the ribosome interact with GTP-bound translation factors. The sequence is that of Large ribosomal subunit protein uL11 from Streptomyces avermitilis (strain ATCC 31267 / DSM 46492 / JCM 5070 / NBRC 14893 / NCIMB 12804 / NRRL 8165 / MA-4680).